A 388-amino-acid polypeptide reads, in one-letter code: Acyl-[acyl-carrier-protein] dehydrogenase MbtN (388 aa).

It belongs to the acyl-CoA dehydrogenase family. It depends on FAD as a cofactor.

Its pathway is siderophore biosynthesis; mycobactin biosynthesis. Its function is as follows. Catalyzes the dehydrogenation at the alpha-beta position of ACP-bound acyl chains. This results in the introduction of a double bond in the lipidic chain, which is further transferred to the epsilon-amino group of lysine residue in the mycobactin core by MbtK. The chain is Acyl-[acyl-carrier-protein] dehydrogenase MbtN (mbtN) from Mycolicibacterium paratuberculosis (strain ATCC BAA-968 / K-10) (Mycobacterium paratuberculosis).